A 457-amino-acid polypeptide reads, in one-letter code: D-hydantoinase (457 aa).

Zn(2+) is bound by residues His57 and His59. A Phosphoserine modification is found at Ser69. Zn(2+) is bound at residue Lys148. At Lys148 the chain carries N6-carboxylysine. Residue Tyr153 coordinates substrate. His181 and His237 together coordinate Zn(2+). Thr286 serves as a coordination point for substrate. Asp313 provides a ligand contact to Zn(2+). Substrate is bound at residue Asn335.

This sequence belongs to the metallo-dependent hydrolases superfamily. Hydantoinase/dihydropyrimidinase family. In terms of assembly, homodimer and homotetramer. Requires Zn(2+) as cofactor. Post-translationally, carboxylation allows a single lysine to coordinate two zinc ions.

Catalyzes the stereospecific hydrolysis of the cyclic amide bond of D-hydantoin derivatives. In Ralstonia pickettii (Burkholderia pickettii), this protein is D-hydantoinase (hyuA).